A 158-amino-acid polypeptide reads, in one-letter code: Pyruvoyl-dependent arginine decarboxylase (158 aa).

S44 bears the Pyruvic acid (Ser) mark.

It belongs to the PdaD family. Requires pyruvate as cofactor.

It carries out the reaction L-arginine + H(+) = agmatine + CO2. The chain is Pyruvoyl-dependent arginine decarboxylase from Thermococcus sibiricus (strain DSM 12597 / MM 739).